We begin with the raw amino-acid sequence, 489 residues long: Rhamnulokinase (489 aa).

An ATP-binding site is contributed by 13-17 (ASSGR). Cysteines 68 and 222 form a disulfide. Substrate-binding positions include Gly-83 and 236–238 (HDT). The active-site Proton acceptor is the Asp-237. An ATP-binding site is contributed by Thr-259. Asn-296 is a binding site for substrate. An ATP-binding site is contributed by Gln-304. Cys-353 and Cys-370 are oxidised to a cystine. Residue Gly-402 coordinates ATP. Cys-413 and Cys-417 are joined by a disulfide.

It belongs to the rhamnulokinase family. Mg(2+) is required as a cofactor.

The enzyme catalyses L-rhamnulose + ATP = L-rhamnulose 1-phosphate + ADP + H(+). The protein operates within carbohydrate degradation; L-rhamnose degradation; glycerone phosphate from L-rhamnose: step 2/3. Functionally, involved in the catabolism of L-rhamnose (6-deoxy-L-mannose). Catalyzes the transfer of the gamma-phosphate group from ATP to the 1-hydroxyl group of L-rhamnulose to yield L-rhamnulose 1-phosphate. This Salmonella paratyphi B (strain ATCC BAA-1250 / SPB7) protein is Rhamnulokinase.